The following is a 334-amino-acid chain: E3 ubiquitin-protein ligase CIP8 (334 aa).

Residues 111-158 (LNSRNEIDDDEDEDEDDGDEEEEDEEENLTVNDEEDEEDDLRRRNRFP) are disordered. Over residues 117–149 (IDDDEDEDEDDGDEEEEDEEENLTVNDEEDEED) the composition is skewed to acidic residues. Residues 257–298 (CAVCKDGMVMGETGKKLPCGHCYHGDCIVPWLGTRNSCPVCR) form an RING-type; atypical zinc finger. Residues 307–334 (EYEEERKKRTSTVSDSAAASSSSSTSRY) form a disordered region. The span at 317–334 (STVSDSAAASSSSSTSRY) shows a compositional bias: low complexity.

As to quaternary structure, interacts with the RING finger of COP1. Interacts with UBC8 through its N-terminal region. Expressed in both light- and dark-grown seedlings.

The protein resides in the cytoplasm. It catalyses the reaction S-ubiquitinyl-[E2 ubiquitin-conjugating enzyme]-L-cysteine + [acceptor protein]-L-lysine = [E2 ubiquitin-conjugating enzyme]-L-cysteine + N(6)-ubiquitinyl-[acceptor protein]-L-lysine.. Its pathway is protein modification; protein ubiquitination. In terms of biological role, E3 ubiquitin-protein ligase that mediates ubiquitination and subsequent proteasomal degradation of target proteins. Probably forms a minimal ubiquitin ligase complex in cooperation with the E2 enzyme UBC8. Its interaction with COP1 suggests that it may participate in proteasome-mediated degradation of HY5 in vivo. The polypeptide is E3 ubiquitin-protein ligase CIP8 (CIP8) (Arabidopsis thaliana (Mouse-ear cress)).